The sequence spans 1014 residues: 2-oxoglutarate dehydrogenase, mitochondrial (1014 aa).

A mitochondrion-targeting transit peptide spans 1-30 (MLRFVSSQTCRYSSRGLLKTSLLKNASTVK). Thiamine diphosphate is bound by residues Arg-306, Asp-406, Asn-439, and Ile-441. Mg(2+) is bound by residues Asp-406, Asn-439, and Ile-441.

It belongs to the alpha-ketoglutarate dehydrogenase family. In terms of assembly, component of the 2-oxoglutarate dehydrogenase complex (OGDC), also called alpha-ketoglutarate dehydrogenase (KGDH) complex. The copmplex is composed of the catalytic subunits OGDH (2-oxoglutarate dehydrogenase KGD1; also called E1 subunit), DLST (dihydrolipoamide succinyltransferase KGD2; also called E2 subunit) and DLD (dihydrolipoamide dehydrogenase LPD1; also called E3 subunit), and the assembly factor KGD4. Thiamine diphosphate is required as a cofactor. Mg(2+) serves as cofactor.

The protein resides in the mitochondrion. The protein localises to the mitochondrion matrix. Its subcellular location is the mitochondrion nucleoid. It catalyses the reaction N(6)-[(R)-lipoyl]-L-lysyl-[protein] + 2-oxoglutarate + H(+) = N(6)-[(R)-S(8)-succinyldihydrolipoyl]-L-lysyl-[protein] + CO2. With respect to regulation, catabolite repressed. The 2-oxoglutarate dehydrogenase complex catalyzes the overall conversion of 2-oxoglutarate to succinyl-CoA and CO(2). It contains multiple copies of three enzymatic components: 2-oxoglutarate dehydrogenase (E1), dihydrolipoamide succinyltransferase (E2) and lipoamide dehydrogenase (E3). The polypeptide is 2-oxoglutarate dehydrogenase, mitochondrial (KGD1) (Saccharomyces cerevisiae (strain ATCC 204508 / S288c) (Baker's yeast)).